The following is a 685-amino-acid chain: Tripartite terminase subunit 1 (685 aa).

The segment at 173–201 adopts a C3H1-type zinc-finger fold; sequence CWRCVGELMVLPNHGNPSTAEGTHVSCNH. 2 disordered regions span residues 231–254 and 394–423; these read EEKA…EAEG and LGRG…SGAL. The segment covering 395 to 407 has biased composition (basic and acidic residues); the sequence is GRGEEEASRESPE. Residue 619-626 participates in ATP binding; that stretch reads YNKTWGRS.

This sequence belongs to the herpesviridae TRM1 protein family. Associates with TRM2 and TRM3 to form the tripartite terminase complex. Interacts with portal protein.

It is found in the host nucleus. Functionally, component of the molecular motor that translocates viral genomic DNA in empty capsid during DNA packaging. Forms a tripartite terminase complex together with TRM2 and TRM3 in the host cytoplasm. Once the complex reaches the host nucleus, it interacts with the capsid portal vertex. This portal forms a ring in which genomic DNA is translocated into the capsid. TRM1 carries an endonuclease activity that plays an important role for the cleavage of concatemeric viral DNA into unit length genomes. In Epstein-Barr virus (strain B95-8) (HHV-4), this protein is Tripartite terminase subunit 1.